Reading from the N-terminus, the 174-residue chain is Rubredoxin-2 (174 aa).

The Rubredoxin-like 1 domain maps to 1-53; it reads MAKYQCPDCEYIYDEVAGHPHEGFPPGTSWETIPEEWACPDCAVRDKADFVVI. The Fe cation site is built by Cys6, Cys9, Cys39, and Cys42. Positions 56-65 are enriched in low complexity; it reads GSASPASGAA. The segment at 56-115 is disordered; the sequence is GSASPASGAATPEVRTATTPPKAEASPQKSTGASTPSANNKAKAKAKAKPARAKSSKDST. Basic residues predominate over residues 97–109; the sequence is AKAKAKAKPARAK. The Rubredoxin-like 2 domain maps to 121 to 172; the sequence is FRKWICITCGHIYDEALGDETEGFAPGTLFEDIPDDWCCPDCGATKEDYVLH. Fe cation-binding residues include Cys126, Cys129, Cys159, and Cys162.

Belongs to the rubredoxin family. The cofactor is Fe(3+).

Its subcellular location is the cytoplasm. It participates in hydrocarbon metabolism; alkane degradation. In terms of biological role, involved in the hydrocarbon hydroxylating system, which transfers electrons from NADH to rubredoxin reductase and then through rubredoxin to alkane 1 monooxygenase. The protein is Rubredoxin-2 (alkG) of Alcanivorax borkumensis (strain ATCC 700651 / DSM 11573 / NCIMB 13689 / SK2).